The following is a 150-amino-acid chain: Galactose-binding lectin (150 aa).

D-galactose-binding residues include histidine 16 and glycine 19. Asparagine 26 carries N-linked (GlcNAc...) asparagine glycosylation. Residues asparagine 27, 35 to 37 (DIH), histidine 64, and glycine 67 each bind D-galactose. An N-linked (GlcNAc...) asparagine glycan is attached at asparagine 74. D-galactose is bound by residues glutamate 75, 83–85 (DRH), histidine 108, and glycine 111. N-linked (GlcNAc...) asparagine glycosylation occurs at asparagine 118. Residues asparagine 119 and 127–129 (DKH) contribute to the D-galactose site.

In terms of assembly, monomer in solution. Homodimer in solution. Exists as a monomer in solution when a low concentration (0.001 mg/ml) of it is present. Homodimers start to appear at a concentration of 0.01 mg/ml and tetramers at a concentration of 0.1 mg/ml. As to expression, highly expressed in mantle and to a lesser extent in muscle, hepatopancreas, gill and hemocytes.

With respect to regulation, bacterial binding activity is inhibited by D-galactose. Hemagglutinating activity is independent of divalent cations Ca2(+) or Mg2(+). It is strongly inhibited by N-acetyl-D-galactosamine (GalNAc), D-galactose and D-talose, and to a lesser extent by melibiose and raffinose. Also inhibited by glycoprotein asialo-bovine submaxillary mucin (BSM). Not inhibited by D-glucose, D-fucose, D-galactitol, N-acetyl-D-glucosamine or lactose. Fungal binding activity is inhibited by D-galactose. Cytotoxic activity against Raji cell line is completely inhibited by galactose, melibiose and raffinose, but not by glucose or lactose. Galactose inhibits binding to laminin and BSM, but not to collagen, gelatin or fibronectin. Galactose-binding lectin. Binds both alpha and beta anomer of galactose (Gal), but has a stronger interaction with the glycans having alpha Gal at the non-reducing end and binds beta Gal weakly only in highly branched glycans. Has high affinity to Galalpha1-4Galbeta1-4GlcNAc. Binds N-acetyl-2-deoxy-2-amino-galactose (2-deoxy-GalNAc). Binds N-acetylgalactosamine (GalNAc). Binds porcine stomach mucin (PSM) with high affinity. Binds galactosamine. Binds laminin, bovine submaxillary mucin (BSM), fibronectin, type I collagen and gelatin with a decreasing affinity, respectively. Has hemagglutinating activity towards human type A erythrocytes. Also hemagglutinates human type 0, B and AB erythrocytes as well as rabbit and mouse erythrocytes. Agglutinates both Gram-positive and Gram-negative bacteria including B.subtilis ATCC 6633, S.aureus ATCC 21027 and E.coli 3254, respectively. No agglutination activity towards Gram-positive S.amurskyense CMM 3673. Has bacteriostatic activity on S.amurskyense CMM 3673, B.subtilis ATCC 6633, S.aureus ATCC 21027 and E.coli 3254. However, has no agglutination nor bacteriostatic activity on Gram-negative C.scophthalmum CIP 104199 or A.troitsensis KMM 3674. Inhibits growth of fungi from the genera Aspergillus, Penicillium, Trichoderma and st. Mycelia. Inhibits germination of spores and hyphal growth of them. Has dose-dependent cytotoxic effect on the human globotriaosylceramide (Gb3)-expressing Burkitt's lymphoma (Raji) cell line. Binds to Gb3 in these cells leading to activation of caspase-9/3 and PARP. Has dose-dependent cytotoxic effect on the Gb3-expressing human MCF-7 breast cancer cell line. No cytotoxic effect on myelogenous leukemia K562 cell line, which does not express Gb3. Activates immune responses in mice and increases cytokine production of TNF-alpha, IL-6 and MCP-1 in the serum and the peritoneal lavage of mice. Induces TNF-alpha and IL-6 secretion in mouse RAW264.7 macrophages, mouse bone marrow-derived macrophages, human THP-1 macrophages, human peripheral blood mononuclear cells (PBMCs) and human blood monocyte-derived macrophages. TNF-alpha production in macrophages could not be inhibited by GalNAc, GalN or Gal, indicating that induced cytokine production is separate from its sugar binding activity. Increases intracellular reactive oxygen species levels, expression and phosphorylation of protein kinases PKC alpha/delta, expression of COX-2 and NF-kappaB, and activates the MAPK pathway by increasing the phosphorylation of ERK1/2, JNK1/2 and p38 in mouse RAW264.7 macrophages. Induces endotoxin tolerance in lipopolysaccharide(LPS)-activated macrophages by down-regulating IRAK2 expression, reducing JNK1/2 phosphorylation and NF-kappaB activation. Can slightly increase the bactericidal activity of RAW264.7 macrophages. Has DNA-binding activity. Recognizes pathogen-associated molecular patterns (PAMPs) and binds to LPS from E.coli, but has only little binding to beta-1,3-glucan from E.gracilis and peptidoglycan from S.aureus. Activates secretion of TNF-alpha and IFN-gamma by the human peripheral blood cells (HPBCs). May be involved in innate immunity acting as an antibacterial and antifungal agent involved in the recognition and clearance of pathogens. The sequence is that of Galactose-binding lectin from Crenomytilus grayanus (Gray mussel).